The primary structure comprises 237 residues: Sugar fermentation stimulation protein homolog (237 aa).

It belongs to the SfsA family.

This is Sugar fermentation stimulation protein homolog from Pseudomonas putida (strain GB-1).